Here is a 306-residue protein sequence, read N- to C-terminus: Ankyrin repeat domain-containing protein 23 (306 aa).

Positions Gln41–Lys90 form a coiled coil. The disordered stretch occupies residues Leu78 to Pro107. The segment covering Gln80 to Val91 has biased composition (basic residues). ANK repeat units lie at residues Leu144 to Val173, Leu177 to Ala206, Ile210 to Ala239, and Glu243 to Val272. The tract at residues Arg179 to Arg196 is interaction with TTN.

In terms of assembly, interacts with titin/TTN and MYPN.

The protein resides in the nucleus. Functionally, may be involved in the energy metabolism. Could be a molecular link between myofibrillar stretch-induced signaling pathways and muscle gene expression. The chain is Ankyrin repeat domain-containing protein 23 (Ankrd23) from Mus musculus (Mouse).